Consider the following 229-residue polypeptide: Platelet-activating factor acetylhydrolase IB subunit alpha2 (229 aa).

S2 is modified (N-acetylserine). A Phosphoserine modification is found at S2. S48 is a catalytic residue. Residue S64 is modified to Phosphoserine. Catalysis depends on residues D193 and H196. Position 220 is a phosphothreonine (T220).

Belongs to the 'GDSL' lipolytic enzyme family. Platelet-activating factor acetylhydrolase IB beta/gamma subunits subfamily. In terms of assembly, forms a catalytic dimer which is either homodimer (alpha2/alpha2 homodimer) or heterodimer with PAFAH1B3 (alpha2/alpha1 heterodimer). Component of the cytosolic (PAF-AH (I)) heterotetrameric enzyme, which is composed of PAFAH1B1 (beta), PAFAH1B2 (alpha2) and PAFAH1B3 (alpha1) subunits. The catalytic activity of the enzyme resides in the alpha1 (PAFAH1B3) and alpha2 (PAFAH1B2) subunits, whereas the beta subunit (PAFAH1B1) has regulatory activity. Trimer formation is not essential for the catalytic activity. Interacts (homodimer form) with PAFAH1B1 (homodimer form); PAFAH1B2 competes with NDEL1 for PAFAH1B1 binding. Interacts with VLDLR; this interaction may modulate the Reelin pathway.

Its subcellular location is the cytoplasm. The catalysed reaction is a 1-O-alkyl-2-acetyl-sn-glycero-3-phosphocholine + H2O = a 1-O-alkyl-sn-glycero-3-phosphocholine + acetate + H(+). It catalyses the reaction 1-O-hexadecyl-2-acetyl-sn-glycero-3-phosphocholine + H2O = 1-O-hexadecyl-sn-glycero-3-phosphocholine + acetate + H(+). It carries out the reaction 1-O-hexadecyl-2-acetyl-sn-glycero-3-phosphate + H2O = 1-O-hexadecyl-sn-glycero-3-phosphate + acetate + H(+). The enzyme catalyses 1-O-hexadecyl-2-acetyl-sn-glycero-3-phosphoethanolamine + H2O = 1-O-hexadecyl-sn-glycero-3-phosphoethanolamine + acetate + H(+). With respect to regulation, beta subunit (PAFAH1B1) stimulates the acetylhydrolase activity of the alpha2/alpha2 catalytic homodimer. In terms of biological role, alpha2 catalytic subunit of the cytosolic type I platelet-activating factor (PAF) acetylhydrolase (PAF-AH (I)) heterotetrameric enzyme that catalyzes the hydrolyze of the acetyl group at the sn-2 position of PAF and its analogs and modulates the action of PAF. The activity and substrate specificity of PAF-AH (I) are affected by its subunit composition. The alpha2/alpha2 homodimer (PAFAH1B2/PAFAH1B2 homodimer) hydrolyzes PAF and 1-O-alkyl-2-acetyl-sn-glycero-3-phosphorylethanolamine (AAGPE) more efficiently than 1-O-alkyl-2-acetyl-sn-glycero-3-phosphoric acid (AAGPA). In contrast, the alpha1/alpha2 heterodimer(PAFAH1B3/PAFAH1B3 heterodimer) hydrolyzes AAGPA more efficiently than PAF, but has little hydrolytic activity towards AAGPE. May play a role in male germ cell meiosis during the late pachytenestage and meiotic divisions as well as early spermiogenesis. This Mus musculus (Mouse) protein is Platelet-activating factor acetylhydrolase IB subunit alpha2.